The sequence spans 437 residues: Selenocysteine lyase (437 aa).

Met-1 bears the N-acetylmethionine mark. Residues 1–30 form a disordered region; the sequence is MEAAGARNRDARSRAEKSPPESRKVYMDYN. Basic and acidic residues predominate over residues 7–26; that stretch reads RNRDARSRAEKSPPESRKVY. The residue at position 252 (Lys-252) is an N6-(pyridoxal phosphate)lysine. Residue Cys-380 is the S-selanylcysteine intermediate of the active site.

It belongs to the class-V pyridoxal-phosphate-dependent aminotransferase family. Homodimer. Pyridoxal 5'-phosphate is required as a cofactor.

The protein resides in the cytoplasm. It is found in the cytosol. The catalysed reaction is L-selenocysteine + AH2 = hydrogenselenide + L-alanine + A + H(+). Its function is as follows. Catalyzes the decomposition of L-selenocysteine to L-alanine and elemental selenium. In Bos taurus (Bovine), this protein is Selenocysteine lyase (SCLY).